A 449-amino-acid polypeptide reads, in one-letter code: MHDRTFHIETFGCQMNVNDSDWLARALMERGFSPAPFGEARLTIVNTCSVRDKPEQKVYSLLGRIRQATGKKPDAFVAVGGCVAQQIGSGFFSRFPQVRLVFGTDGLAMAPQALDRLVEEPDLKLSLLDFSEDYPERDAVLGQGAVPASVFVNIMQGCDNFCAYCIVPYTRGRQKSRATGTILDECRALLDRGAREITLLGQNVNSFGQDSHGDGTTFAQLLHKVAALPGLERLRFVTPHPKDIAPEVVEAFGTLPNLCPRLHLPLQAGSDRILKLMGRRYDMARYLRIVDDLRAARPDIVLSSDIIVGFPGETEEDFMETMGALETVGYAASYSFCYSDRPGTRAEMLPDKLSREVKLERLERLQTLQNRLTERCLQDMVGKKVEVLLEGMSRKPGDEGDSWQGRDPYGNLVNVALPQGSDVRGRFLPVVVAQAKKHSLLAEQAGAPW.

The 116-residue stretch at 4–119 (RTFHIETFGC…APQALDRLVE (116 aa)) folds into the MTTase N-terminal domain. Residues Cys-13, Cys-48, Cys-82, Cys-158, Cys-162, and Cys-165 each contribute to the [4Fe-4S] cluster site. In terms of domain architecture, Radical SAM core spans 144–375 (GAVPASVFVN…QTLQNRLTER (232 aa)). In terms of domain architecture, TRAM spans 378–446 (QDMVGKKVEV…KHSLLAEQAG (69 aa)).

It belongs to the methylthiotransferase family. MiaB subfamily. As to quaternary structure, monomer. [4Fe-4S] cluster serves as cofactor.

The protein resides in the cytoplasm. It carries out the reaction N(6)-dimethylallyladenosine(37) in tRNA + (sulfur carrier)-SH + AH2 + 2 S-adenosyl-L-methionine = 2-methylsulfanyl-N(6)-dimethylallyladenosine(37) in tRNA + (sulfur carrier)-H + 5'-deoxyadenosine + L-methionine + A + S-adenosyl-L-homocysteine + 2 H(+). Catalyzes the methylthiolation of N6-(dimethylallyl)adenosine (i(6)A), leading to the formation of 2-methylthio-N6-(dimethylallyl)adenosine (ms(2)i(6)A) at position 37 in tRNAs that read codons beginning with uridine. This chain is tRNA-2-methylthio-N(6)-dimethylallyladenosine synthase, found in Nitratidesulfovibrio vulgaris (strain DP4) (Desulfovibrio vulgaris).